We begin with the raw amino-acid sequence, 556 residues long: Formate--tetrahydrofolate ligase (556 aa).

65 to 72 (TPAGEGKT) lines the ATP pocket.

Belongs to the formate--tetrahydrofolate ligase family.

It carries out the reaction (6S)-5,6,7,8-tetrahydrofolate + formate + ATP = (6R)-10-formyltetrahydrofolate + ADP + phosphate. It participates in one-carbon metabolism; tetrahydrofolate interconversion. The protein is Formate--tetrahydrofolate ligase of Lachnoclostridium phytofermentans (strain ATCC 700394 / DSM 18823 / ISDg) (Clostridium phytofermentans).